The chain runs to 489 residues: Membrane-bound lytic murein transglycosylase F (489 aa).

The signal sequence occupies residues M1–A32. A non-LT domain region spans residues P33–V268. Residues D269–L489 form an LT domain region. The active site involves E315. The interval A466–L489 is disordered. Residues T478–L489 are compositionally biased toward basic and acidic residues.

This sequence in the N-terminal section; belongs to the bacterial solute-binding protein 3 family. It in the C-terminal section; belongs to the transglycosylase Slt family.

The protein localises to the cell outer membrane. It catalyses the reaction Exolytic cleavage of the (1-&gt;4)-beta-glycosidic linkage between N-acetylmuramic acid (MurNAc) and N-acetylglucosamine (GlcNAc) residues in peptidoglycan, from either the reducing or the non-reducing ends of the peptidoglycan chains, with concomitant formation of a 1,6-anhydrobond in the MurNAc residue.. In terms of biological role, murein-degrading enzyme that degrades murein glycan strands and insoluble, high-molecular weight murein sacculi, with the concomitant formation of a 1,6-anhydromuramoyl product. Lytic transglycosylases (LTs) play an integral role in the metabolism of the peptidoglycan (PG) sacculus. Their lytic action creates space within the PG sacculus to allow for its expansion as well as for the insertion of various structures such as secretion systems and flagella. The protein is Membrane-bound lytic murein transglycosylase F of Pseudomonas aeruginosa (strain UCBPP-PA14).